Consider the following 474-residue polypeptide: Aspartyl/glutamyl-tRNA(Asn/Gln) amidotransferase subunit B (474 aa).

The protein belongs to the GatB/GatE family. GatB subfamily. Heterotrimer of A, B and C subunits.

The catalysed reaction is L-glutamyl-tRNA(Gln) + L-glutamine + ATP + H2O = L-glutaminyl-tRNA(Gln) + L-glutamate + ADP + phosphate + H(+). The enzyme catalyses L-aspartyl-tRNA(Asn) + L-glutamine + ATP + H2O = L-asparaginyl-tRNA(Asn) + L-glutamate + ADP + phosphate + 2 H(+). Allows the formation of correctly charged Asn-tRNA(Asn) or Gln-tRNA(Gln) through the transamidation of misacylated Asp-tRNA(Asn) or Glu-tRNA(Gln) in organisms which lack either or both of asparaginyl-tRNA or glutaminyl-tRNA synthetases. The reaction takes place in the presence of glutamine and ATP through an activated phospho-Asp-tRNA(Asn) or phospho-Glu-tRNA(Gln). This Desulfotalea psychrophila (strain LSv54 / DSM 12343) protein is Aspartyl/glutamyl-tRNA(Asn/Gln) amidotransferase subunit B.